The sequence spans 420 residues: MAKFDILEDLKWRGAINQETDEEGLRKYLAEHDDLALYCGTDPTGDSLHIGHLIPFMILKRFQMAGYHPVILIGGGTGAIGDPSGRTTERVLQTAEQVKHNEESLTNQMKKLFGTENFEIRNNAEWLGKINLIDFLRDYGKYFQVNNMINKDVVASRLENGISFTEFTYQILQAIDFYHLNKDDGVQLQIGGGDQWGNITAGIDLIHKLEGSDRPAFGLTIPLMLKADGTKFGKSAGGAVWLDPEKTSPYEFYQFWINQDDRDVVKYLKYFTFLSHEEIEDLAEKTEKEPWKRAAQKKLAEEVTKFVHGEEGLKEAQMITDALFSGDIKNLSVTQIEQGLKNAPSAEAGSEKKNIVDFLVDTKIEPSKRQAREDVKNGAIYVNGDREQSVDFEVDPSSAFDGKYVIIRKGKRKYTLVTIK.

Tyrosine 38 contributes to the L-tyrosine binding site. The short motif at 43 to 52 (PTGDSLHIGH) is the 'HIGH' region element. Positions 169 and 173 each coordinate L-tyrosine. The 'KMSKS' region signature appears at 231–235 (KFGKS). Lysine 234 is a binding site for ATP. An S4 RNA-binding domain is found at 353 to 419 (KNIVDFLVDT…GKRKYTLVTI (67 aa)).

Belongs to the class-I aminoacyl-tRNA synthetase family. TyrS type 1 subfamily. Homodimer.

The protein resides in the cytoplasm. The enzyme catalyses tRNA(Tyr) + L-tyrosine + ATP = L-tyrosyl-tRNA(Tyr) + AMP + diphosphate + H(+). Its function is as follows. Catalyzes the attachment of tyrosine to tRNA(Tyr) in a two-step reaction: tyrosine is first activated by ATP to form Tyr-AMP and then transferred to the acceptor end of tRNA(Tyr). In Lactobacillus acidophilus (strain ATCC 700396 / NCK56 / N2 / NCFM), this protein is Tyrosine--tRNA ligase.